A 260-amino-acid polypeptide reads, in one-letter code: Large ribosomal subunit protein eL8A (260 aa).

The disordered stretch occupies residues 1–34 (MPSSKKVAPAPLATKSKASTSTKNPLFESTPKNF).

The protein belongs to the eukaryotic ribosomal protein eL8 family. As to quaternary structure, component of the large ribosomal subunit. Mature ribosomes consist of a small (40S) and a large (60S) subunit. The 40S subunit contains about 32 different proteins and 1 molecule of RNA (18S). The 60S subunit contains 45 different proteins and 3 molecules of RNA (25S, 5.8S and 5S).

It localises to the cytoplasm. Functionally, component of the ribosome, a large ribonucleoprotein complex responsible for the synthesis of proteins in the cell. The small ribosomal subunit (SSU) binds messenger RNAs (mRNAs) and translates the encoded message by selecting cognate aminoacyl-transfer RNA (tRNA) molecules. The large subunit (LSU) contains the ribosomal catalytic site termed the peptidyl transferase center (PTC), which catalyzes the formation of peptide bonds, thereby polymerizing the amino acids delivered by tRNAs into a polypeptide chain. The nascent polypeptides leave the ribosome through a tunnel in the LSU and interact with protein factors that function in enzymatic processing, targeting, and the membrane insertion of nascent chains at the exit of the ribosomal tunnel. In Candida albicans (strain SC5314 / ATCC MYA-2876) (Yeast), this protein is Large ribosomal subunit protein eL8A.